Consider the following 398-residue polypeptide: Acetate kinase 1 (398 aa).

Asn9 serves as a coordination point for Mg(2+). Lys16 serves as a coordination point for ATP. Substrate is bound at residue Arg89. Asp146 serves as the catalytic Proton donor/acceptor. ATP contacts are provided by residues 206-210 (HLGNG), 281-283 (DCR), and 329-333 (GIGEN). Residue Glu384 participates in Mg(2+) binding.

Belongs to the acetokinase family. In terms of assembly, homodimer. It depends on Mg(2+) as a cofactor. The cofactor is Mn(2+).

Its subcellular location is the cytoplasm. The catalysed reaction is acetate + ATP = acetyl phosphate + ADP. Its pathway is metabolic intermediate biosynthesis; acetyl-CoA biosynthesis; acetyl-CoA from acetate: step 1/2. Functionally, catalyzes the formation of acetyl phosphate from acetate and ATP. Can also catalyze the reverse reaction. The protein is Acetate kinase 1 of Vibrio vulnificus (strain CMCP6).